Reading from the N-terminus, the 148-residue chain is MEVILLEKVANLGSLGDKVKVKAGYGRNFLLPYGKAVPATEANVKAFEERRAELEKAAAEKLAAAQARAEALEGASFTITSKAGEEGKLFGSIGVRDIADAVSTGGTEVEKSEVRLPEGPIRVTGEYDIELQLHTDVEVTIKLAVVAE.

The protein belongs to the bacterial ribosomal protein bL9 family.

Functionally, binds to the 23S rRNA. This chain is Large ribosomal subunit protein bL9, found in Marinobacter nauticus (strain ATCC 700491 / DSM 11845 / VT8) (Marinobacter aquaeolei).